The chain runs to 232 residues: MADDRLIVALDVPNVVQGLDLAERLGDAVSFYKIGLGMLTGGGLALANELKQERGKRIFLDMKLFDIGATVEAAVRGFASYDLDFLTVHGDPQVVRAAVQGASGSGLRILAVTVLTSLDRADLDANMIRAGDLAEITLERAARALDAGAHGVIASPQEAAAIRALPQAAGRLIVTPGVRPTGAALGDQKRVATPARAIADGADHIVVGRPIWQAGDPRAAALAVQAELPTRG.

Substrate contacts are provided by residues Asp-11, Lys-33, 61 to 70 (DMKLFDIGAT), Thr-116, Arg-179, Gln-188, Gly-208, and Arg-209. Lys-63 functions as the Proton donor in the catalytic mechanism.

Belongs to the OMP decarboxylase family. Type 1 subfamily. As to quaternary structure, homodimer.

It carries out the reaction orotidine 5'-phosphate + H(+) = UMP + CO2. It participates in pyrimidine metabolism; UMP biosynthesis via de novo pathway; UMP from orotate: step 2/2. Catalyzes the decarboxylation of orotidine 5'-monophosphate (OMP) to uridine 5'-monophosphate (UMP). This is Orotidine 5'-phosphate decarboxylase from Cereibacter sphaeroides (strain ATCC 17023 / DSM 158 / JCM 6121 / CCUG 31486 / LMG 2827 / NBRC 12203 / NCIMB 8253 / ATH 2.4.1.) (Rhodobacter sphaeroides).